Reading from the N-terminus, the 130-residue chain is Small ribosomal subunit protein uS11c (130 aa).

Belongs to the universal ribosomal protein uS11 family. As to quaternary structure, part of the 30S ribosomal subunit.

The protein resides in the plastid. The chain is Small ribosomal subunit protein uS11c from Aneura mirabilis (Parasitic liverwort).